The primary structure comprises 209 residues: Kynurenine formamidase (209 aa).

Tryptophan 20 provides a ligand contact to substrate. Residues histidine 50, histidine 54, and aspartate 56 each contribute to the Zn(2+) site. Histidine 60 functions as the Proton donor/acceptor in the catalytic mechanism. Residues histidine 161 and glutamate 173 each coordinate Zn(2+).

It belongs to the Cyclase 1 superfamily. KynB family. Homodimer. Zn(2+) is required as a cofactor.

It carries out the reaction N-formyl-L-kynurenine + H2O = L-kynurenine + formate + H(+). The protein operates within amino-acid degradation; L-tryptophan degradation via kynurenine pathway; L-kynurenine from L-tryptophan: step 2/2. Functionally, catalyzes the hydrolysis of N-formyl-L-kynurenine to L-kynurenine, the second step in the kynurenine pathway of tryptophan degradation. This is Kynurenine formamidase from Bacillus cereus (strain ATCC 10987 / NRS 248).